The sequence spans 803 residues: Urocanate reductase (803 aa).

Serine 258 bears the FMN phosphoryl serine mark. Residues alanine 311, glutamate 330, asparagine 338, threonine 339, glycine 343, glycine 344, and aspartate 573 each contribute to the FAD site. Residue arginine 632 is the Proton donor of the active site. FAD contacts are provided by histidine 739, glutamate 768, alanine 783, and leucine 784.

It belongs to the FAD-dependent oxidoreductase 2 family. FRD/SDH subfamily. It depends on FAD as a cofactor. FMN is required as a cofactor.

It catalyses the reaction dihydrourocanate + A = urocanate + AH2. Catalyzes the two-electron reduction of urocanate to dihydrourocanate (also named imidazole propionate or deamino-histidine). Dihydrourocanate is present at higher concentrations in subjects with type 2 diabetes, and directly impairs glucose tolerance and insulin signaling at the level of insulin receptor substrate (IRS) through activation of p38 gamma (MAPK12)-p62-mTORC1. Therefore, the UrdA enzyme from the gut bacteria S.mutans strain UA159 may contribute to the pathogenesis of type 2 diabetes by producing the microbial metabolite dihydrourocanate. This chain is Urocanate reductase, found in Streptococcus mutans serotype c (strain ATCC 700610 / UA159).